A 127-amino-acid polypeptide reads, in one-letter code: Large ribosomal subunit protein bL21 (127 aa).

The protein belongs to the bacterial ribosomal protein bL21 family. In terms of assembly, part of the 50S ribosomal subunit. Contacts protein L20.

Its function is as follows. This protein binds to 23S rRNA in the presence of protein L20. In Synechococcus elongatus (strain ATCC 33912 / PCC 7942 / FACHB-805) (Anacystis nidulans R2), this protein is Large ribosomal subunit protein bL21.